Here is a 129-residue protein sequence, read N- to C-terminus: uncharacterized protein (129 aa).

The helical transmembrane segment at 77 to 97 threads the bilayer; it reads ILAVFIISFIIVVVGVLLLGL. A disordered region spans residues 109-129; it reads SSNDKKLQSNDEEKQALAEKA. Residues 111–129 show a composition bias toward basic and acidic residues; that stretch reads NDKKLQSNDEEKQALAEKA.

The protein localises to the vacuole membrane. This is an uncharacterized protein from Saccharomyces cerevisiae (strain ATCC 204508 / S288c) (Baker's yeast).